The following is a 20-amino-acid chain: ASCTERKHDCTKDRHSCCRG.

The protein belongs to the spider toxin CSTX family. In terms of tissue distribution, expressed by the venom gland.

The protein localises to the secreted. In terms of biological role, spider venom toxin that exhibits cytolytic activity by forming an alpha-helix across the membrane. Lethal to insect larvae. The polypeptide is Toxin CpTx-4a (Cheiracanthium punctorium (Yellow sac spider)).